Consider the following 199-residue polypeptide: Dephospho-CoA kinase (199 aa).

Residues 3–199 (TLGVTGGIGS…ELYWAVTGGQ (197 aa)) form the DPCK domain. 11–16 (GSGKTT) is a binding site for ATP.

Belongs to the CoaE family.

The protein resides in the cytoplasm. The catalysed reaction is 3'-dephospho-CoA + ATP = ADP + CoA + H(+). It participates in cofactor biosynthesis; coenzyme A biosynthesis; CoA from (R)-pantothenate: step 5/5. In terms of biological role, catalyzes the phosphorylation of the 3'-hydroxyl group of dephosphocoenzyme A to form coenzyme A. The polypeptide is Dephospho-CoA kinase (Salinibacter ruber (strain DSM 13855 / M31)).